The sequence spans 723 residues: Preterminal protein (723 aa).

A Nuclear localization signal motif is present at residues 453 to 462 (RLPMRRRRRR). Residues 457-492 (RRRRRRAPPPPPMSEELSEPEVEAFPPASPPRRSFE) form a disordered region. S651 carries the post-translational modification O-(5'-phospho-DNA)-serine.

This sequence belongs to the adenoviridae terminal protein family. In terms of assembly, heterodimer with the polymerase; this heterodimer binds to bp 9 to 18 of the genome. Interacts with host POU2F1; POU2F1 binds to the auxiliary sequences in the inverted terminal repeats and tethers the pTP-POL heterodimer to the origin DNA thereby participating in the assembly of the pre-initiation complex (POL-TP-DBP-NFIA-POU2F1). Preterminal protein is used to replicate viral genome, upon genomic encapsidation it is processed first into iTP and finally into TP by adenovirus protease.

It localises to the host nucleus matrix. Functionally, protein covalently bound to the viral DNA that acts as a primer for viral genomic replication by DNA strand displacement. Assembles on the viral origin of replication in an initiation complex with viral polymerase, DBP, host NFIA and host POU2F1/OCT1. During initiation, the polymerase covalently couples the first dCTP with Ser-580 of pTP. The terminal protein stimulates the template activity over 20 fold compared to protein-free templates. Neo-synthesized viral genomes are linked to two preterminal proteins, one for each 5' end. These new genomes are encapsidated in the nucleus, and during capsid maturation by viral protease, preterminal protein is first cleaved into intermediary (iTP), then into mature TP. May play a role in host nuclear matrix localization of genomic DNA. This Canis lupus familiaris (Dog) protein is Preterminal protein.